A 331-amino-acid polypeptide reads, in one-letter code: D-lactate/D-glycerate dehydrogenase (331 aa).

Residues 154 to 155, D174, 205 to 206, N211, 232 to 234, and D258 contribute to the NAD(+) site; these read RI, VP, and FAR. R234 is an active-site residue. E263 is an active-site residue. H295 (proton donor) is an active-site residue.

Belongs to the D-isomer specific 2-hydroxyacid dehydrogenase family. In terms of assembly, homodimer.

The enzyme catalyses (R)-lactate + NAD(+) = pyruvate + NADH + H(+). The catalysed reaction is (R)-glycerate + NAD(+) = 3-hydroxypyruvate + NADH + H(+). Functionally, has both D-lactate and D-glycerate dehydrogenase activities. Equally active on pyruvate and hydroxypyruvate. The protein is D-lactate/D-glycerate dehydrogenase of Pediococcus acidilactici.